A 138-amino-acid polypeptide reads, in one-letter code: Putative pre-16S rRNA nuclease (138 aa).

The protein belongs to the YqgF nuclease family.

The protein resides in the cytoplasm. In terms of biological role, could be a nuclease involved in processing of the 5'-end of pre-16S rRNA. The protein is Putative pre-16S rRNA nuclease of Glaesserella parasuis serovar 5 (strain SH0165) (Haemophilus parasuis).